Reading from the N-terminus, the 230-residue chain is Urease accessory protein UreE (230 aa).

The interval 197–230 (LHIHAIHSHGDGDSHNHDHDHSHSHGDHDHDHKH) is disordered. The segment covering 204–230 (SHGDGDSHNHDHDHSHSHGDHDHDHKH) has biased composition (basic and acidic residues).

The protein belongs to the UreE family.

The protein resides in the cytoplasm. Its function is as follows. Involved in urease metallocenter assembly. Binds nickel. Probably functions as a nickel donor during metallocenter assembly. This chain is Urease accessory protein UreE, found in Yersinia aldovae.